The chain runs to 391 residues: GTPase Obg (391 aa).

In terms of domain architecture, Obg spans Met1–Leu159. An OBG-type G domain is found at Ala160–Glu333. GTP is bound by residues Gly166–Ser173, Phe191–Ile195, Asp213–Gly216, Asn283–Asp286, and Ser314–Ala316. Positions 173 and 193 each coordinate Mg(2+). Basic and acidic residues predominate over residues Leu367–Asn377. Residues Leu367 to Pro391 form a disordered region. Residues Asp378–Pro391 are compositionally biased toward acidic residues.

This sequence belongs to the TRAFAC class OBG-HflX-like GTPase superfamily. OBG GTPase family. In terms of assembly, monomer. The cofactor is Mg(2+).

The protein localises to the cytoplasm. Its function is as follows. An essential GTPase which binds GTP, GDP and possibly (p)ppGpp with moderate affinity, with high nucleotide exchange rates and a fairly low GTP hydrolysis rate. Plays a role in control of the cell cycle, stress response, ribosome biogenesis and in those bacteria that undergo differentiation, in morphogenesis control. The sequence is that of GTPase Obg from Alcanivorax borkumensis (strain ATCC 700651 / DSM 11573 / NCIMB 13689 / SK2).